We begin with the raw amino-acid sequence, 1027 residues long: D-2-hydroxyglutarate dehydrogenase (1027 aa).

An FAD-binding PCMH-type domain is found at 48–284 (YQQLPQAILF…CEAKLNLLLI (237 aa)). (R)-2-hydroxyglutarate is bound by residues Arg405 and His503. Positions 665–696 (HEVKAAMDTCLACKACASQCPIKIDVPSFRAK) constitute a 4Fe-4S ferredoxin-type domain. The [4Fe-4S] cluster site is built by Cys674, Cys677, Cys680, and Cys684.

This sequence in the N-terminal section; belongs to the FAD-binding oxidoreductase/transferase type 4 family. As to quaternary structure, homotetramer. Requires [4Fe-4S] cluster as cofactor. The cofactor is FAD.

The catalysed reaction is (R)-2-hydroxyglutarate + A = 2-oxoglutarate + AH2. Catalyzes the oxidation of D-2-hydroxyglutarate (D-2-HGA) to 2-oxoglutarate. Provides the way to recycle D-2-HGA produced during L-serine synthesis by SerA, by converting it back to 2-oxoglutarate. The physiological molecule that functions as the primary electron acceptor during D-2-HGA oxidation is unknown. This is D-2-hydroxyglutarate dehydrogenase from Haemophilus influenzae (strain ATCC 51907 / DSM 11121 / KW20 / Rd).